The following is a 482-amino-acid chain: MKFIIKLFPEITIKSQSVRLRFIKILTGNIRNVLKHYDETLAVVRHWDNIEVRAKDENQRLAIRDALTRIPGIHHILEVEDVPFTDMHDIFEKALVQYRDQLEGKTFCVRVKRRGKHDFSSIDVERYVGGGLNQHIESARVKLTNPDVTVHLEVEDDRLLLIKGRYEGIGGFPIGTQEDVLSLISGGFDSGVSSYMLMRRGCRVHYCFFNLGGAAHEIGVRQVAHYLWNRFGSSHRVRFVAINFEPVVGEILEKIDDGQMGVILKRMMVRAASKVAERYGVQALVTGEALGQVSSQTLTNLRLIDNVSDTLILRPLISYDKEHIINLARQIGTEDFARTMPEYCGVISKSPTVKAVKSKIEAEEEKFDFSILDKVVEEANNVDIREIAQQTEQEVVEVETVNGFGPNDVILDIRSIDEQEDKPLKVEGIDVVSLPFYKLSTKFGDLDQSKTWLLWCERGVMSRLQALYLREQGFNNVKVYRP.

The THUMP domain occupies 61–165 (LAIRDALTRI…DDRLLLIKGR (105 aa)). Residues 183-184 (LI), lysine 265, glycine 287, and glutamine 296 each bind ATP. Cysteine 344 and cysteine 456 are oxidised to a cystine. The Rhodanese domain occupies 404–482 (FGPNDVILDI…GFNNVKVYRP (79 aa)). Residue cysteine 456 is the Cysteine persulfide intermediate of the active site.

Belongs to the ThiI family.

It localises to the cytoplasm. It carries out the reaction [ThiI sulfur-carrier protein]-S-sulfanyl-L-cysteine + a uridine in tRNA + 2 reduced [2Fe-2S]-[ferredoxin] + ATP + H(+) = [ThiI sulfur-carrier protein]-L-cysteine + a 4-thiouridine in tRNA + 2 oxidized [2Fe-2S]-[ferredoxin] + AMP + diphosphate. The catalysed reaction is [ThiS sulfur-carrier protein]-C-terminal Gly-Gly-AMP + S-sulfanyl-L-cysteinyl-[cysteine desulfurase] + AH2 = [ThiS sulfur-carrier protein]-C-terminal-Gly-aminoethanethioate + L-cysteinyl-[cysteine desulfurase] + A + AMP + 2 H(+). It participates in cofactor biosynthesis; thiamine diphosphate biosynthesis. Catalyzes the ATP-dependent transfer of a sulfur to tRNA to produce 4-thiouridine in position 8 of tRNAs, which functions as a near-UV photosensor. Also catalyzes the transfer of sulfur to the sulfur carrier protein ThiS, forming ThiS-thiocarboxylate. This is a step in the synthesis of thiazole, in the thiamine biosynthesis pathway. The sulfur is donated as persulfide by IscS. This chain is tRNA sulfurtransferase, found in Escherichia coli O127:H6 (strain E2348/69 / EPEC).